The sequence spans 410 residues: Adenosine receptor A2a (410 aa).

Residues 1 to 4 (MGSS) lie on the Extracellular side of the membrane. The chain crosses the membrane as a helical span at residues 5–29 (VYIMVELAIAVLAILGNVLVCWAVW). Over 30–39 (INSNLQNVTN) the chain is Cytoplasmic. A helical membrane pass occupies residues 40–63 (FFVVSLAAADIAVGVLAIPFAITI). The Extracellular segment spans residues 64–74 (STGFCAACHGC). Disulfide bonds link Cys68-Cys154, Cys71-Cys143, and Cys74-Cys161. The helical transmembrane segment at 75 to 97 (LFFACFVLVLTQSSIFSLLAIAI) threads the bilayer. Topologically, residues 98–117 (DRYIAIRIPLRYNGLVTGMR) are cytoplasmic. The helical transmembrane segment at 118–140 (AKGIIAICWVLSFAIGLTPMLGW) threads the bilayer. At 141 to 168 (NNCSQKDENSTKTCGEGRVTCLFEDVVP) the chain is on the extracellular side. N-linked (GlcNAc...) asparagine glycosylation is found at Asn142 and Asn149. Glu164 is a binding site for adenosine. A helical membrane pass occupies residues 169–193 (MNYMVYYNFFAFVLLPLLLMLAIYL). The Cytoplasmic segment spans residues 194-229 (RIFLAARRQLKQMESQPLPGERTRSTLQKEVHAAKS). The chain crosses the membrane as a helical span at residues 230 to 253 (LAIIVGLFALCWLPLHIINCFTFF). Position 248 (Asn248) interacts with adenosine. Cysteines 254 and 257 form a disulfide. Residues 254–261 (CSTCQHAP) are Extracellular-facing. Residues 262-285 (PWLMYLAIILSHSNSVVNPFIYAY) form a helical membrane-spanning segment. 2 residues coordinate adenosine: Ser272 and His273. Topologically, residues 286 to 410 (RIREFRQTFR…ASWSSEFAPS (125 aa)) are cytoplasmic. Residues 322-410 (HSTEGEQVSL…ASWSSEFAPS (89 aa)) are interaction with GAS2L2. The segment at 342–410 (ANGSAPHSGR…ASWSSEFAPS (69 aa)) is disordered. Positions 377-389 (TQEHQEGQEHPGL) are enriched in basic and acidic residues. A compositionally biased stretch (polar residues) spans 401–410 (ASWSSEFAPS).

It belongs to the G-protein coupled receptor 1 family. Interacts (via cytoplasmic C-terminal domain) with USP4; the interaction is direct. May interact with DRD4. Interacts with NECAB2. Interacts (via cytoplasmic C-terminal domain) with GAS2L2; interaction enhances receptor-mediated adenylyl cyclase activity. In terms of processing, ubiquitinated. Deubiquitinated by USP4; leading to stabilization and expression at the cell surface.

It localises to the cell membrane. Its function is as follows. Receptor for adenosine. The activity of this receptor is mediated by G proteins which activate adenylyl cyclase. The sequence is that of Adenosine receptor A2a (Adora2a) from Mus musculus (Mouse).